The primary structure comprises 181 residues: Ribulose bisphosphate carboxylase small subunit, chloroplastic 2 (181 aa).

Residues 1-57 (MASSVISSAAVATRTNVTQAGSMIAPFTGLKSAATFPVSRKQNLDITSIASNGGRVR) constitute a chloroplast transit peptide.

The protein belongs to the RuBisCO small chain family. In terms of assembly, heterohexadecamer of 8 large and 8 small subunits.

It is found in the plastid. The protein resides in the chloroplast. Its function is as follows. RuBisCO catalyzes two reactions: the carboxylation of D-ribulose 1,5-bisphosphate, the primary event in carbon dioxide fixation, as well as the oxidative fragmentation of the pentose substrate. Both reactions occur simultaneously and in competition at the same active site. Although the small subunit is not catalytic it is essential for maximal activity. This Solanum tuberosum (Potato) protein is Ribulose bisphosphate carboxylase small subunit, chloroplastic 2.